The following is a 187-amino-acid chain: Elongation factor P (187 aa).

The protein belongs to the elongation factor P family.

Its subcellular location is the cytoplasm. The protein operates within protein biosynthesis; polypeptide chain elongation. Its function is as follows. Involved in peptide bond synthesis. Stimulates efficient translation and peptide-bond synthesis on native or reconstituted 70S ribosomes in vitro. Probably functions indirectly by altering the affinity of the ribosome for aminoacyl-tRNA, thus increasing their reactivity as acceptors for peptidyl transferase. The sequence is that of Elongation factor P from Chromobacterium violaceum (strain ATCC 12472 / DSM 30191 / JCM 1249 / CCUG 213 / NBRC 12614 / NCIMB 9131 / NCTC 9757 / MK).